Here is a 759-residue protein sequence, read N- to C-terminus: Holliday junction resolvase YEN1 (759 aa).

Disordered regions lie at residues 62-83 (RSRS…SQEY), 498-518 (SQSP…TRRQ), and 683-702 (KSRT…KSRS). The span at 500–512 (SPLKRSNSPSRSK) shows a compositional bias: low complexity. Residues serine 730 and serine 731 each carry the phosphoserine modification.

Belongs to the XPG/RAD2 endonuclease family. GEN subfamily.

It localises to the cytoplasm. The protein localises to the nucleus. Functionally, endonuclease which resolves Holliday junctions by the introduction of symmetrically related cuts across the junction point, to produce nicked duplex products in which the nicks can be readily ligated. Four-way DNA intermediates, also known as Holliday junctions, are formed during homologous recombination and DNA repair, and their resolution is necessary for proper chromosome segregation. Involved in DNA-damage repair in vegetative cells. The chain is Holliday junction resolvase YEN1 (YEN1) from Saccharomyces cerevisiae (strain ATCC 204508 / S288c) (Baker's yeast).